The primary structure comprises 137 residues: Large ribosomal subunit protein uL16 (137 aa).

It belongs to the universal ribosomal protein uL16 family. As to quaternary structure, part of the 50S ribosomal subunit.

Binds 23S rRNA and is also seen to make contacts with the A and possibly P site tRNAs. The polypeptide is Large ribosomal subunit protein uL16 (Nitrobacter winogradskyi (strain ATCC 25391 / DSM 10237 / CIP 104748 / NCIMB 11846 / Nb-255)).